A 406-amino-acid polypeptide reads, in one-letter code: MQNQGIKKIVLAYSGGLDTSAIIPWLKENYGGCEVVAFVADIGQERSDLEGVEQKALQSGASECHVVDLREEFIRDYVYPVLQTGALYEGSYLLGTSMARPIIAKAQVELALKVGADAVCHGATGKGNDQVRFETTYTALAPHLKVVAPWREWNLRSREALLDYLKERNIPTTASLEKIYSRDENAWHISTEGGVLESPWNAPNKDCWVWTVDPQEAPDQPEQVTITVEKGCVVAVNGEALSPYKCLETLNVLGAKHGVGRIDIVENRLVGIKSRGCYETPGGTIMVAALRGVEQLVLDRDSFKWREQLGLEMSYVVYDGRWFAPLRRSLQASAEALAEEVNGEVVLQLYKGQVTAIQKKSANSLYSEEFATFGEDEVYDHSHAGGFIRLFSLSSRIRALNEIKNK.

Residues 12–20 and A40 each bind ATP; that span reads AYSGGLDTS. The L-citrulline site is built by Y92 and S97. Residue G122 participates in ATP binding. 3 residues coordinate L-aspartate: T124, N128, and D129. N128 contacts L-citrulline. The L-citrulline site is built by R132, S181, S190, E266, and Y278.

This sequence belongs to the argininosuccinate synthase family. Type 1 subfamily. Homotetramer.

The protein localises to the cytoplasm. The enzyme catalyses L-citrulline + L-aspartate + ATP = 2-(N(omega)-L-arginino)succinate + AMP + diphosphate + H(+). It participates in amino-acid biosynthesis; L-arginine biosynthesis; L-arginine from L-ornithine and carbamoyl phosphate: step 2/3. This is Argininosuccinate synthase from Serratia proteamaculans (strain 568).